The primary structure comprises 434 residues: UDP-N-acetylglucosamine 1-carboxyvinyltransferase (434 aa).

Phosphoenolpyruvate is bound at residue 34 to 35; it reads KN. R104 lines the UDP-N-acetyl-alpha-D-glucosamine pocket. C128 serves as the catalytic Proton donor. C128 bears the 2-(S-cysteinyl)pyruvic acid O-phosphothioketal mark. Residues D319 and I341 each contribute to the UDP-N-acetyl-alpha-D-glucosamine site.

The protein belongs to the EPSP synthase family. MurA subfamily.

The protein localises to the cytoplasm. It catalyses the reaction phosphoenolpyruvate + UDP-N-acetyl-alpha-D-glucosamine = UDP-N-acetyl-3-O-(1-carboxyvinyl)-alpha-D-glucosamine + phosphate. It functions in the pathway cell wall biogenesis; peptidoglycan biosynthesis. Functionally, cell wall formation. Adds enolpyruvyl to UDP-N-acetylglucosamine. This Prochlorococcus marinus (strain MIT 9313) protein is UDP-N-acetylglucosamine 1-carboxyvinyltransferase.